Reading from the N-terminus, the 484-residue chain is Protein nucleotidyltransferase YdiU (484 aa).

ATP is bound by residues glycine 81, glycine 83, arginine 84, lysine 103, aspartate 115, glycine 116, arginine 166, and arginine 173. Catalysis depends on aspartate 244, which acts as the Proton acceptor. Mg(2+)-binding residues include asparagine 245 and aspartate 254. Aspartate 254 is a binding site for ATP.

Belongs to the SELO family. Requires Mg(2+) as cofactor. The cofactor is Mn(2+).

It catalyses the reaction L-seryl-[protein] + ATP = 3-O-(5'-adenylyl)-L-seryl-[protein] + diphosphate. It carries out the reaction L-threonyl-[protein] + ATP = 3-O-(5'-adenylyl)-L-threonyl-[protein] + diphosphate. The catalysed reaction is L-tyrosyl-[protein] + ATP = O-(5'-adenylyl)-L-tyrosyl-[protein] + diphosphate. The enzyme catalyses L-histidyl-[protein] + UTP = N(tele)-(5'-uridylyl)-L-histidyl-[protein] + diphosphate. It catalyses the reaction L-seryl-[protein] + UTP = O-(5'-uridylyl)-L-seryl-[protein] + diphosphate. It carries out the reaction L-tyrosyl-[protein] + UTP = O-(5'-uridylyl)-L-tyrosyl-[protein] + diphosphate. Functionally, nucleotidyltransferase involved in the post-translational modification of proteins. It can catalyze the addition of adenosine monophosphate (AMP) or uridine monophosphate (UMP) to a protein, resulting in modifications known as AMPylation and UMPylation. This chain is Protein nucleotidyltransferase YdiU, found in Shewanella baltica (strain OS223).